The chain runs to 654 residues: Acetyl-coenzyme A synthetase (654 aa).

CoA contacts are provided by residues 190–193 and threonine 313; that span reads RGGK. ATP contacts are provided by residues 389–391, 413–418, aspartate 504, and arginine 519; these read GEP and DTWWQT. Serine 527 provides a ligand contact to CoA. Arginine 530 contacts ATP. Mg(2+)-binding residues include valine 541 and valine 546. Position 613 is an N6-acetyllysine (lysine 613).

Belongs to the ATP-dependent AMP-binding enzyme family. Mg(2+) is required as a cofactor. In terms of processing, acetylated. Deacetylation by the SIR2-homolog deacetylase activates the enzyme.

It carries out the reaction acetate + ATP + CoA = acetyl-CoA + AMP + diphosphate. Functionally, catalyzes the conversion of acetate into acetyl-CoA (AcCoA), an essential intermediate at the junction of anabolic and catabolic pathways. AcsA undergoes a two-step reaction. In the first half reaction, AcsA combines acetate with ATP to form acetyl-adenylate (AcAMP) intermediate. In the second half reaction, it can then transfer the acetyl group from AcAMP to the sulfhydryl group of CoA, forming the product AcCoA. The sequence is that of Acetyl-coenzyme A synthetase from Leptospira borgpetersenii serovar Hardjo-bovis (strain JB197).